Reading from the N-terminus, the 433-residue chain is Arrestin domain-containing protein 1 (433 aa).

2 disordered regions span residues 296-322 (GLGL…AEAA) and 349-372 (LSSV…PLHP). Residues 301–312 (PGAPPLVVPSAP) show a composition bias toward pro residues. 2 short sequence motifs (PPxY motif) span residues 402–405 (PPEY) and 415–418 (PPSY).

This sequence belongs to the arrestin family. Interacts (via PPxY motifs) with ITCH (via WW domains); the interaction is direct and participates in the recruitment of the ubiquitin-protein ligase ITCH to the NOTCH1 receptor. Interacts with ARRB1 and ARRB2; the interaction is direct. Interacts with TSG101; may recruit TSG101 to the plasma membrane. Interacts (via PPxY motifs) with WWP2 (via WW domains); ubiquitinates ARRDC1. Interacts with SLC11A2; controls the incorporation of SLC11A2 into extracellular vesicles through an ubiquitination-dependent mechanism. Interacts with WWP1 (via WW domains). Interacts with NEDD4 (via WW domains). Interacts with PDCD6IP. Post-translationally, ubiquitinated. Ubiquitination by WWP2; promotes localization to extracellular microvesicles. Ubiquitinated by WWP1.

It localises to the cell membrane. Its function is as follows. Functions as an adapter recruiting ubiquitin-protein ligases to their specific substrates. Through an ubiquitination-dependent mechanism plays for instance a role in the incorporation of SLC11A2 into extracellular vesicles. More generally, plays a role in the extracellular transport of proteins between cells through the release in the extracellular space of microvesicles. By participating in the ITCH-mediated ubiquitination and subsequent degradation of NOTCH1, negatively regulates the NOTCH signaling pathway. The protein is Arrestin domain-containing protein 1 of Homo sapiens (Human).